The primary structure comprises 249 residues: 2,3-bisphosphoglycerate-dependent phosphoglycerate mutase (249 aa).

Substrate-binding positions include Arg8–Asn15, Thr21–Gly22, Arg60, Glu87–Tyr90, Lys98, Arg114–Arg115, and Gly183–Asn184. His9 functions as the Tele-phosphohistidine intermediate in the catalytic mechanism. Residue Glu87 is the Proton donor/acceptor of the active site.

Belongs to the phosphoglycerate mutase family. BPG-dependent PGAM subfamily.

It catalyses the reaction (2R)-2-phosphoglycerate = (2R)-3-phosphoglycerate. It participates in carbohydrate degradation; glycolysis; pyruvate from D-glyceraldehyde 3-phosphate: step 3/5. Its function is as follows. Catalyzes the interconversion of 2-phosphoglycerate and 3-phosphoglycerate. The sequence is that of 2,3-bisphosphoglycerate-dependent phosphoglycerate mutase from Methanoregula boonei (strain DSM 21154 / JCM 14090 / 6A8).